The primary structure comprises 290 residues: MKFAIFGNTYQAKKSSHAATLFKLLEKHGAEICVCREFHRFLKSDLKLNVKADDLFDENNFDADMVISIGGDGTFLKAARRVGNKGIPILGINTGRLGFLADVSPEEMEETIEEVYQNHYTVEERSVLQLLCDDKHLQNSPYALNEIAILKRDSSSMISIRTAINGAHLTTYQADGLIIATPTGSTAYSLSVGGPIIVPHSKTIAITPVAPHSLNVRPIVICDDWEITLDVESRSHNFLVAIDGSSETCKETTRLTIRRADYSIKVVKRFYHIFFDTLRTKMMWGADSRV.

The active-site Proton acceptor is Asp-72. Residues 72–73, Lys-77, 145–146, Asp-175, 186–191, and Ala-210 each bind NAD(+); these read DG, NE, and TAYSLS.

This sequence belongs to the NAD kinase family. A divalent metal cation is required as a cofactor.

It is found in the cytoplasm. The enzyme catalyses NAD(+) + ATP = ADP + NADP(+) + H(+). Functionally, involved in the regulation of the intracellular balance of NAD and NADP, and is a key enzyme in the biosynthesis of NADP. Catalyzes specifically the phosphorylation on 2'-hydroxyl of the adenosine moiety of NAD to yield NADP. The polypeptide is NAD kinase (Bacteroides fragilis (strain YCH46)).